The sequence spans 179 residues: Large ribosomal subunit protein uL6 (179 aa).

Belongs to the universal ribosomal protein uL6 family. In terms of assembly, part of the 50S ribosomal subunit.

Its function is as follows. This protein binds to the 23S rRNA, and is important in its secondary structure. It is located near the subunit interface in the base of the L7/L12 stalk, and near the tRNA binding site of the peptidyltransferase center. This chain is Large ribosomal subunit protein uL6, found in Chlorobium phaeobacteroides (strain DSM 266 / SMG 266 / 2430).